The following is a 241-amino-acid chain: Large ribosomal subunit protein uL3 (241 aa).

2 disordered regions span residues 140-162 (SHRS…NKKM) and 217-241 (PLPG…EETA). Gln-151 is modified (N5-methylglutamine). A compositionally biased stretch (low complexity) spans 229–241 (APATEAPAAEETA).

The protein belongs to the universal ribosomal protein uL3 family. Part of the 50S ribosomal subunit. Forms a cluster with proteins L14 and L19. Methylated by PrmB.

Its function is as follows. One of the primary rRNA binding proteins, it binds directly near the 3'-end of the 23S rRNA, where it nucleates assembly of the 50S subunit. This Methylobacterium radiotolerans (strain ATCC 27329 / DSM 1819 / JCM 2831 / NBRC 15690 / NCIMB 10815 / 0-1) protein is Large ribosomal subunit protein uL3.